We begin with the raw amino-acid sequence, 1077 residues long: Rap guanine nucleotide exchange factor 1 (1077 aa).

Leucine 57 is covalently cross-linked (Glycyl lysine isopeptide (Lys-Gly) (interchain with G-Cter in SUMO2)). 2 disordered regions span residues 207–235 (IEKQGRPSPTSPVKPSSPASKPDGPAELP) and 248–300 (TGMS…PTRV). Low complexity predominate over residues 213-228 (PSPTSPVKPSSPASKP). 5 positions are modified to phosphoserine: serine 281, serine 293, serine 314, serine 335, and serine 360. The SH3-binding motif lies at 281 to 292 (SPPPALPPKKRQ). Disordered stretches follow at residues 336 to 376 (GGSH…QCSR) and 411 to 494 (LSPL…EDLQ). Residues 358-371 (SKSDEQLSSLDRDS) show a composition bias toward basic and acidic residues. Residues 451 to 462 (DTPPALPEKKRR) carry the SH3-binding motif. The span at 484-494 (QYDNISGEDLQ) shows a compositional bias: polar residues. Tyrosine 504 is subject to Phosphotyrosine; by HCK. 2 consecutive short sequence motifs (SH3-binding) follow at residues 538 to 549 (EKPPPLPEKKNK) and 606 to 617 (APPPALPPKQRQ). The interval 600 to 670 (DSVQELAPPP…SEEEVDELSL (71 aa)) is disordered. Residues 640-651 (KDSRDGSERAPK) show a composition bias toward basic and acidic residues. Acidic residues predominate over residues 660-669 (QSEEEVDELS). The N-terminal Ras-GEF domain occupies 688 to 810 (DGPDVRGGSG…LRKNILDKVD (123 aa)). The 225-residue stretch at 840 to 1064 (HSHEIAEQLT…WELSLKIKPR (225 aa)) folds into the Ras-GEF domain.

Interacts with HCK (via SH3-binding sites). Interacts with CRK (via SH3-binding sites). In terms of processing, phosphorylation at Tyr-504 enhances activity as Rap guanine nucleotide exchange factor. Ubiquitously expressed in adult and fetus. Expression is high in adult skeletal muscle and placenta and in fetal brain and heart. Low levels of expression in adult and fetal liver.

It localises to the early endosome. In terms of biological role, guanine nucleotide-releasing protein that binds to SH3 domain of CRK and GRB2/ASH. Transduces signals from CRK to activate RAS. Involved in cell branching and adhesion mediated by BCAR1-CRK-RAPGEF1 signaling and activation of RAP1. Plays a role in the establishment of basal endothelial barrier function. Plays a role in nerve growth factor (NGF)-induced sustained activation of Rap1 and neurite outgrowth. The polypeptide is Rap guanine nucleotide exchange factor 1 (RAPGEF1) (Homo sapiens (Human)).